Consider the following 467-residue polypeptide: UDP-N-acetylmuramoylalanine--D-glutamate ligase (467 aa).

121-127 contributes to the ATP binding site; the sequence is GTNGKST.

The protein belongs to the MurCDEF family.

Its subcellular location is the cytoplasm. It carries out the reaction UDP-N-acetyl-alpha-D-muramoyl-L-alanine + D-glutamate + ATP = UDP-N-acetyl-alpha-D-muramoyl-L-alanyl-D-glutamate + ADP + phosphate + H(+). It participates in cell wall biogenesis; peptidoglycan biosynthesis. In terms of biological role, cell wall formation. Catalyzes the addition of glutamate to the nucleotide precursor UDP-N-acetylmuramoyl-L-alanine (UMA). This chain is UDP-N-acetylmuramoylalanine--D-glutamate ligase, found in Chelativorans sp. (strain BNC1).